Consider the following 857-residue polypeptide: Potassium channel AKT1 (857 aa).

Residues 1–61 (MRGGALLCGQ…PYDHKYRIWE (61 aa)) are Cytoplasmic-facing. Residues 62-82 (AFLVVLVVYTAWVSPFEFGFL) form a helical membrane-spanning segment. The Extracellular segment spans residues 83–90 (RKPRPPLS). Residues 91–111 (ITDNIVNAFFAIDIIMTFFVG) form a helical membrane-spanning segment. Over 112-134 (YLDKSTYLIVDDRKQIAFKYLRS) the chain is Cytoplasmic. The helical transmembrane segment at 135-155 (WFLLDLVSTIPSEAAMRISSQ) threads the bilayer. The Extracellular segment spans residues 156–158 (SYG). Residues 159–179 (LFNMLRLWRLRRVGALFARLE) traverse the membrane as a helical; Voltage-sensor segment. Residues 180–193 (KDRNFNYFWVRCAK) are Cytoplasmic-facing. The helical transmembrane segment at 194-214 (LVCVTLFAVHCAACFYYLIAA) threads the bilayer. Topologically, residues 215–241 (RNSNPAKTWIGANVANFLEESLWMRYV) are extracellular. An intramembrane region (pore-forming) is located at residues 242 to 261 (TSMYWSITTLTTVGYGDLHP). Residues 262 to 265 (VNTK) are Extracellular-facing. Residues 266–286 (EMIFDIFYMLFNLGLTAYLIG) form a helical membrane-spanning segment. Topologically, residues 287–857 (NMTNLVVHGT…GDHLIFATDS (571 aa)) are cytoplasmic. Position 372–493 (372–493 (LFRGVSNDLL…IMNNLLQHLK (122 aa))) interacts with a nucleoside 3',5'-cyclic phosphate. ANK repeat units follow at residues 515 to 546 (KMDL…DPNE), 550 to 579 (NGRT…DPNC), 583 to 612 (EGSV…TIDA), 614 to 643 (DVGH…DVTR), 647 to 676 (TGTS…DVNK), and 680 to 709 (HGWT…ERRV). Residues 790 to 857 (RVTISCAEKD…GDHLIFATDS (68 aa)) enclose the KHA domain.

This sequence belongs to the potassium channel family. Plant (TC 1.A.1.4) subfamily. As to quaternary structure, the potassium channel is probably composed of a homo- or heterotetrameric complex of pore-forming subunits. Possible heteromultimer with AKT2 or KAT3. Part of a K(+)-channel calcium-sensing kinase/phosphatase complex composed by a calcium sensor CBL (CBL1, CBL2, CBL3 or CBL9), a kinase CIPK (CIPK6, CIPK16 or CIPK23), a phosphatase PP2C (AIP1) and a K(+)-channel (AKT1). Interacts directly with AIP1, CBL10, CIPK6, CIPK16 and CIPK23. Phosphorylated by CIPK proteins CIPK6, CIPK16 and CIPK23. The activation by phosphorylation is induced by low K(+) conditions and stimulates K(+) uptake and relocation. Dephosphorylation by AIP1 repressed the transport activity. As to expression, preferentially expressed in the peripheral cell layers of root mature including root cortex and root hairs. Detected also, at a lower level, in the mesophyll of the leaves and at restricted sites corresponding to hydathodes and guard cells.

Its subcellular location is the cell membrane. Its function is as follows. Highly selective inward-rectifying potassium channel that mediate potassium uptake by plant roots in response to low K(+) conditions, by a calcium-, CBL-, and CIPK-dependent pathway. Positively regulated by phosphorylation by CIPK23. Negatively regulated by a kinase-independent regulatory mechanism involving a competing direct binding of CBL10. Involved in the stomatal regulation by monitoring the turgor pressure in guard cells. Assuming opened or closed conformations in response to the voltage difference across the membrane, the channel is activated by hyperpolarization. May interact with the cytoskeleton or with regulatory proteins. Is essential with POT5/HAK5 for high-affinity potassium uptake in roots during seedling establishment and postgermination growth under low potassium conditions. The protein is Potassium channel AKT1 (AKT1) of Arabidopsis thaliana (Mouse-ear cress).